The primary structure comprises 63 residues: Protein D-63 (63 aa).

Homodimer.

This protein may be involved in virus assembly. The protein is Protein D-63 of Saccharolobus solfataricus (Sulfolobus solfataricus).